The following is a 662-amino-acid chain: DNA helicase/primase complex-associated protein (662 aa).

The protein belongs to the herpesviridae HEPA family. In terms of assembly, associates with the primase and the helicase to form the helicase-primase complex. Interacts with the origin-binding protein. Interacts with the polymerase catalytic subunit.

The protein localises to the host nucleus. Component of the helicase/primase complex. Unwinds the DNA at the replication forks and generates single-stranded DNA for both leading and lagging strand synthesis. The primase synthesizes short RNA primers on the lagging strand that the polymerase presumably elongates using dNTPs. The primase-associated factor has no known catalytic activity in the complex and may serve to facilitate the formation of the replisome by directly interacting with the origin-binding protein and the polymerase. The protein is DNA helicase/primase complex-associated protein (U74) of Human herpesvirus 6B (strain Z29) (HHV-6 variant B).